The chain runs to 95 residues: MNIRPLHDRVIVRRTQEEKTTESGLIIPDSATEKPSKGEILAIGNGKINDNGDVIALDVKVGDQVLFGQYAGNEIKVDGETLLVVREDDIVAIIE.

This sequence belongs to the GroES chaperonin family. As to quaternary structure, heptamer of 7 subunits arranged in a ring. Interacts with the chaperonin GroEL.

It is found in the cytoplasm. Its function is as follows. Together with the chaperonin GroEL, plays an essential role in assisting protein folding. The GroEL-GroES system forms a nano-cage that allows encapsulation of the non-native substrate proteins and provides a physical environment optimized to promote and accelerate protein folding. GroES binds to the apical surface of the GroEL ring, thereby capping the opening of the GroEL channel. This Ruthia magnifica subsp. Calyptogena magnifica protein is Co-chaperonin GroES.